The following is a 319-amino-acid chain: Sulfate adenylyltransferase subunit 2 (319 aa).

It belongs to the PAPS reductase family. CysD subfamily. In terms of assembly, heterodimer composed of CysD, the smaller subunit, and CysN.

The enzyme catalyses sulfate + ATP + H(+) = adenosine 5'-phosphosulfate + diphosphate. Its pathway is sulfur metabolism; hydrogen sulfide biosynthesis; sulfite from sulfate: step 1/3. Its function is as follows. With CysN forms the ATP sulfurylase (ATPS) that catalyzes the adenylation of sulfate producing adenosine 5'-phosphosulfate (APS) and diphosphate, the first enzymatic step in sulfur assimilation pathway. APS synthesis involves the formation of a high-energy phosphoric-sulfuric acid anhydride bond driven by GTP hydrolysis by CysN coupled to ATP hydrolysis by CysD. This is Sulfate adenylyltransferase subunit 2 from Methylobacterium radiotolerans (strain ATCC 27329 / DSM 1819 / JCM 2831 / NBRC 15690 / NCIMB 10815 / 0-1).